Consider the following 423-residue polypeptide: Ferrochelatase, mitochondrial (423 aa).

A mitochondrion-targeting transit peptide spans 1–40; it reads MIRFCPSCFALKRTAPVLNHTSRLGNYFNNTFSKFSVNRM. Cys200 is a binding site for [2Fe-2S] cluster. Residue Asp385 is part of the active site. [2Fe-2S] cluster-binding residues include Cys405, Cys408, and Cys413.

This sequence belongs to the ferrochelatase family. In terms of assembly, monomer. Requires [2Fe-2S] cluster as cofactor.

The protein localises to the mitochondrion inner membrane. Its subcellular location is the cytoplasm. It is found in the nucleus. It carries out the reaction heme b + 2 H(+) = protoporphyrin IX + Fe(2+). It functions in the pathway porphyrin-containing compound metabolism; protoheme biosynthesis; protoheme from protoporphyrin-IX: step 1/1. Catalyzes the ferrous insertion into protoporphyrin IX. In Schizosaccharomyces pombe (strain 972 / ATCC 24843) (Fission yeast), this protein is Ferrochelatase, mitochondrial (hem15).